A 364-amino-acid polypeptide reads, in one-letter code: Putative galactoside 2-alpha-L-fucosyltransferase svh-11 (364 aa).

Residues 1–19 are Cytoplasmic-facing; it reads MRLFHFLKFLTINNFSRYC. The chain crosses the membrane as a helical; Signal-anchor for type II membrane protein span at residues 20–42; the sequence is LKIVKVHIIWITIICIIYFNWRF. Residues 43–364 are Lumenal-facing; that stretch reads KKLDFMAIPY…SANSFTVVRS (322 aa). N-linked (GlcNAc...) asparagine glycans are attached at residues Asn-60 and Asn-128.

This sequence belongs to the glycosyltransferase 11 family.

It localises to the golgi apparatus. It is found in the golgi stack membrane. In terms of biological role, mediates the transfer of fucose to the terminal galactose on glycan chains of cell surface glycoproteins and glycolipids. Required for axon regeneration after injury. The protein is Putative galactoside 2-alpha-L-fucosyltransferase svh-11 of Caenorhabditis elegans.